Reading from the N-terminus, the 1408-residue chain is ABC multidrug transporter MDR1 (1408 aa).

The segment covering 1-13 (MSASPSPIGAAAG) has biased composition (low complexity). The segment at 1–103 (MSASPSPIGA…SISSAVPKSH (103 aa)) is disordered. Over residues 17-38 (LQARRDEEVVDSEKDALAHDSH) the composition is skewed to basic and acidic residues. Transmembrane regions (helical) follow at residues 147–167 (FAAPLEIVAMVFGLLLAIAAG) and 223–243 (LYLMAIGIGMFLATWLYMFIW). An ABC transmembrane type-1 1 domain is found at 157–464 (VFGLLLAIAA…LAPELAAVTK (308 aa)). The N-linked (GlcNAc...) asparagine glycan is linked to asparagine 244. 4 helical membrane-spanning segments follow: residues 296 to 316 (KVALVFQYAGTFVCGFVLAFV), 321 to 341 (LAGALISILPVIMICGGIMMT), 408 to 428 (IMFFAIYAAYALAFYYGGILV), and 436 to 456 (GIVINVFMSILIGSFSMAMLA). One can recognise an ABC transporter 1 domain in the interval 499-744 (ISFENVRFHY…ENGPYAQLVN (246 aa)). Residue 534 to 541 (GASGSGKS) participates in ATP binding. The next 2 helical transmembrane spans lie at 838–858 (IFAFIAAICAGMVYPSLAILF) and 882–902 (LWYFITALAAAIVIFFQSAGF). The ABC transmembrane type-1 2 domain occupies 838 to 1125 (IFAFIAAICA…VFTFVPDASK (288 aa)). Asparagine 934 carries N-linked (GlcNAc...) asparagine glycosylation. 4 helical membrane passes run 952 to 972 (GLFGPTLGTVVQSCATLIGGC), 973 to 993 (IIGLCYGPLLSLIGIACIPIL), 1072 to 1092 (GLTFCIIALVFYIGALWIIDG), and 1099 to 1119 (FYTVLNSIVFASIQAGNVFTF). Residues asparagine 1127 and asparagine 1182 are each glycosylated (N-linked (GlcNAc...) asparagine). The 241-residue stretch at 1162 to 1402 (VRIEGVHFRY…KGGYYDLVQM (241 aa)) folds into the ABC transporter 2 domain. 1197-1204 (GPSGCGKS) is a binding site for ATP. N-linked (GlcNAc...) asparagine glycosylation occurs at asparagine 1404.

It belongs to the ABC transporter superfamily. ABCB family. Multidrug resistance exporter (TC 3.A.1.201) subfamily.

Its subcellular location is the cell membrane. It carries out the reaction itraconazole(in) + ATP + H2O = itraconazole(out) + ADP + phosphate + H(+). The catalysed reaction is voriconazole(in) + ATP + H2O = voriconazole(out) + ADP + phosphate + H(+). It catalyses the reaction fluconazole(in) + ATP + H2O = fluconazole(out) + ADP + phosphate + H(+). In terms of biological role, pleiotropic ABC efflux transporter that confers resistance to structurally and functionally unrelated compounds including azoles such as fluconazole (FLC), itraconazole (ITC), posaconazole (POS), nocodazole and voriconazole (VRC). In Cryptococcus deuterogattii (strain R265) (Cryptococcus gattii VGII (strain R265)), this protein is ABC multidrug transporter MDR1.